Reading from the N-terminus, the 434-residue chain is D-inositol 3-phosphate glycosyltransferase (434 aa).

A 1D-myo-inositol 3-phosphate-binding site is contributed by histidine 26. UDP-N-acetyl-alpha-D-glucosamine-binding positions include glutamine 32 to proline 33 and glycine 40. 1D-myo-inositol 3-phosphate-binding positions include aspartate 37–asparagine 42, lysine 95, tyrosine 128, threonine 152, and arginine 172. UDP-N-acetyl-alpha-D-glucosamine-binding residues include arginine 246 and lysine 251. Mg(2+) is bound by residues tyrosine 321, arginine 322, and alanine 324. The UDP-N-acetyl-alpha-D-glucosamine site is built by glutamate 334 and glutamate 342. Mg(2+) is bound at residue threonine 348.

The protein belongs to the glycosyltransferase group 1 family. MshA subfamily. Homodimer.

It carries out the reaction 1D-myo-inositol 3-phosphate + UDP-N-acetyl-alpha-D-glucosamine = 1D-myo-inositol 2-acetamido-2-deoxy-alpha-D-glucopyranoside 3-phosphate + UDP + H(+). Catalyzes the transfer of a N-acetyl-glucosamine moiety to 1D-myo-inositol 3-phosphate to produce 1D-myo-inositol 2-acetamido-2-deoxy-glucopyranoside 3-phosphate in the mycothiol biosynthesis pathway. This Thermobifida fusca (strain YX) protein is D-inositol 3-phosphate glycosyltransferase.